The chain runs to 302 residues: MDAKRLTHLQQLEAESIHIIREVAAEFDNPVMMYSIGKDSSVMLHLARKAFYPGKIPFPLLHVDTDWKFKEMIEFRDKTAEKYGFDLLVHKNPEGLEMGINPFVHGSSKHTDIMKTQGLKQALNKYGFDAAFGGARRDEEKSRAKERVYSFRDKNHTWDPKNQRPELWNTYNGQVNKGESIRVFPLSNWTELDIWQYIYLENIEIVPLYLSEKRPVVERDGMLIMVDDERLKLEEGEEIQHKDIRFRTLGCYPLTGAVESKANTLPEIIEEMLVATSSERQGRAIDHDSSGSMELKKRQGYF.

The tract at residues 279–302 (ERQGRAIDHDSSGSMELKKRQGYF) is disordered. Residues 280 to 302 (RQGRAIDHDSSGSMELKKRQGYF) show a composition bias toward basic and acidic residues.

The protein belongs to the PAPS reductase family. CysD subfamily. As to quaternary structure, heterodimer composed of CysD, the smaller subunit, and CysN.

The catalysed reaction is sulfate + ATP + H(+) = adenosine 5'-phosphosulfate + diphosphate. It participates in sulfur metabolism; hydrogen sulfide biosynthesis; sulfite from sulfate: step 1/3. With CysN forms the ATP sulfurylase (ATPS) that catalyzes the adenylation of sulfate producing adenosine 5'-phosphosulfate (APS) and diphosphate, the first enzymatic step in sulfur assimilation pathway. APS synthesis involves the formation of a high-energy phosphoric-sulfuric acid anhydride bond driven by GTP hydrolysis by CysN coupled to ATP hydrolysis by CysD. In Aliivibrio fischeri (strain ATCC 700601 / ES114) (Vibrio fischeri), this protein is Sulfate adenylyltransferase subunit 2.